A 286-amino-acid chain; its full sequence is Acetyl-coenzyme A carboxylase carboxyl transferase subunit beta (286 aa).

In terms of domain architecture, CoA carboxyltransferase N-terminal spans 27-286 (LMTKCPKCKL…HSEETNHATI (260 aa)). Zn(2+) contacts are provided by Cys31, Cys34, Cys50, and Cys52. The C4-type zinc finger occupies 31–52 (CPKCKLIQYTKQLEANLKVCVC).

The protein belongs to the AccD/PCCB family. As to quaternary structure, acetyl-CoA carboxylase is a heterohexamer composed of biotin carboxyl carrier protein (AccB), biotin carboxylase (AccC) and two subunits each of ACCase subunit alpha (AccA) and ACCase subunit beta (AccD). The cofactor is Zn(2+).

The protein resides in the cytoplasm. It carries out the reaction N(6)-carboxybiotinyl-L-lysyl-[protein] + acetyl-CoA = N(6)-biotinyl-L-lysyl-[protein] + malonyl-CoA. Its pathway is lipid metabolism; malonyl-CoA biosynthesis; malonyl-CoA from acetyl-CoA: step 1/1. Its function is as follows. Component of the acetyl coenzyme A carboxylase (ACC) complex. Biotin carboxylase (BC) catalyzes the carboxylation of biotin on its carrier protein (BCCP) and then the CO(2) group is transferred by the transcarboxylase to acetyl-CoA to form malonyl-CoA. This chain is Acetyl-coenzyme A carboxylase carboxyl transferase subunit beta, found in Exiguobacterium sibiricum (strain DSM 17290 / CCUG 55495 / CIP 109462 / JCM 13490 / 255-15).